Consider the following 101-residue polypeptide: Small ribosomal subunit protein uS14 (101 aa).

Belongs to the universal ribosomal protein uS14 family. Part of the 30S ribosomal subunit. Contacts proteins S3 and S10.

Binds 16S rRNA, required for the assembly of 30S particles and may also be responsible for determining the conformation of the 16S rRNA at the A site. This Alkalilimnicola ehrlichii (strain ATCC BAA-1101 / DSM 17681 / MLHE-1) protein is Small ribosomal subunit protein uS14.